The chain runs to 147 residues: Hemoglobin subunit epsilon (147 aa).

The Globin domain occupies His-3 to His-147. Phosphoserine is present on residues Ser-14 and Ser-51. Heme b-binding residues include His-64 and His-93.

The protein belongs to the globin family. As to quaternary structure, heterotetramer of two alpha chains and two epsilon chains in early embryonic hemoglobin Gower-2; two zeta chains and two epsilon chains in early embryonic hemoglobin Gower-1. Red blood cells.

Its function is as follows. The epsilon chain is a beta-type chain of early mammalian embryonic hemoglobin. The polypeptide is Hemoglobin subunit epsilon (HBE1) (Microcebus murinus (Gray mouse lemur)).